A 419-amino-acid chain; its full sequence is Enolase (419 aa).

Glutamine 161 serves as a coordination point for (2R)-2-phosphoglycerate. Residue glutamate 205 is the Proton donor of the active site. Residues aspartate 240, glutamate 283, and aspartate 309 each contribute to the Mg(2+) site. (2R)-2-phosphoglycerate-binding residues include lysine 334, arginine 363, serine 364, and lysine 385. Catalysis depends on lysine 334, which acts as the Proton acceptor.

The protein belongs to the enolase family. Requires Mg(2+) as cofactor.

The protein resides in the cytoplasm. It localises to the secreted. It is found in the cell surface. The catalysed reaction is (2R)-2-phosphoglycerate = phosphoenolpyruvate + H2O. The protein operates within carbohydrate degradation; glycolysis; pyruvate from D-glyceraldehyde 3-phosphate: step 4/5. In terms of biological role, catalyzes the reversible conversion of 2-phosphoglycerate (2-PG) into phosphoenolpyruvate (PEP). It is essential for the degradation of carbohydrates via glycolysis. The polypeptide is Enolase (Saccharolobus solfataricus (strain ATCC 35092 / DSM 1617 / JCM 11322 / P2) (Sulfolobus solfataricus)).